Reading from the N-terminus, the 663-residue chain is Chaperone protein HtpG (663 aa).

Residues 1–352 (MTKQTLSFQA…SADLPLNVSR (352 aa)) are a; substrate-binding. Basic and acidic residues predominate over residues 218–228 (ELINPSDEKGG). The segment at 218–237 (ELINPSDEKGGRQPGGMVKT) is disordered. Residues 353-595 (ELLQESRDVK…DHGMSTQLAR (243 aa)) form a b region. Residues 596 to 663 (MLKQAGQAAP…YVKRVNALLV (68 aa)) form a c region.

The protein belongs to the heat shock protein 90 family. In terms of assembly, homodimer.

The protein localises to the cytoplasm. In terms of biological role, molecular chaperone. Has ATPase activity. In Albidiferax ferrireducens (strain ATCC BAA-621 / DSM 15236 / T118) (Rhodoferax ferrireducens), this protein is Chaperone protein HtpG.